Consider the following 272-residue polypeptide: Probable feruloyl esterase C (272 aa).

A signal peptide spans 1–22 (MLPTILYSAILALSALTPSALA).

It belongs to the faeC family.

The protein resides in the secreted. The enzyme catalyses feruloyl-polysaccharide + H2O = ferulate + polysaccharide.. Its function is as follows. Involved in degradation of plant cell walls. Hydrolyzes the feruloyl-arabinose ester bond in arabinoxylans, and the feruloyl-galactose ester bond in pectin. Active against paranitrophenyl-acetate, methyl ferulate and wheat arabinoxylan. This Aspergillus clavatus (strain ATCC 1007 / CBS 513.65 / DSM 816 / NCTC 3887 / NRRL 1 / QM 1276 / 107) protein is Probable feruloyl esterase C (faeC-1).